The following is a 253-amino-acid chain: Sugar fermentation stimulation protein homolog (253 aa).

Belongs to the SfsA family.

The sequence is that of Sugar fermentation stimulation protein homolog from Chromohalobacter salexigens (strain ATCC BAA-138 / DSM 3043 / CIP 106854 / NCIMB 13768 / 1H11).